Here is a 262-residue protein sequence, read N- to C-terminus: Phosphatidylglycerol--prolipoprotein diacylglyceryl transferase (262 aa).

4 helical membrane passes run 9–29 (LGPL…ILAV), 41–61 (IIPD…ILGA), 80–100 (IFAI…GALV), and 109–129 (LINT…AQSL). A 1,2-diacyl-sn-glycero-3-phospho-(1'-sn-glycerol) is bound at residue arginine 131. 3 helical membrane-spanning segments follow: residues 167 to 187 (QPTF…ILIF), 197 to 217 (GHIT…IEGM), and 226 to 246 (GLRV…MIVI).

It belongs to the Lgt family.

It localises to the cell membrane. It catalyses the reaction L-cysteinyl-[prolipoprotein] + a 1,2-diacyl-sn-glycero-3-phospho-(1'-sn-glycerol) = an S-1,2-diacyl-sn-glyceryl-L-cysteinyl-[prolipoprotein] + sn-glycerol 1-phosphate + H(+). Its pathway is protein modification; lipoprotein biosynthesis (diacylglyceryl transfer). In terms of biological role, catalyzes the transfer of the diacylglyceryl group from phosphatidylglycerol to the sulfhydryl group of the N-terminal cysteine of a prolipoprotein, the first step in the formation of mature lipoproteins. This Streptococcus pneumoniae (strain ATCC 700669 / Spain 23F-1) protein is Phosphatidylglycerol--prolipoprotein diacylglyceryl transferase.